The chain runs to 695 residues: Probable rhamnogalacturonate lyase C (695 aa).

The first 21 residues, 1–21, serve as a signal peptide directing secretion; the sequence is MFLPSRKALAFLACLASHSVA. N-linked (GlcNAc...) asparagine glycans are attached at residues Asn-28, Asn-96, Asn-118, Asn-144, Asn-199, Asn-285, Asn-532, and Asn-638.

This sequence belongs to the polysaccharide lyase 4 family.

It is found in the secreted. The enzyme catalyses Endotype eliminative cleavage of L-alpha-rhamnopyranosyl-(1-&gt;4)-alpha-D-galactopyranosyluronic acid bonds of rhamnogalacturonan I domains in ramified hairy regions of pectin leaving L-rhamnopyranose at the reducing end and 4-deoxy-4,5-unsaturated D-galactopyranosyluronic acid at the non-reducing end.. Functionally, pectinolytic enzymes consist of four classes of enzymes: pectin lyase, polygalacturonase, pectin methylesterase and rhamnogalacturonase. Degrades the rhamnogalacturonan I (RG-I) backbone of pectin. The polypeptide is Probable rhamnogalacturonate lyase C (rglC) (Aspergillus oryzae (strain ATCC 42149 / RIB 40) (Yellow koji mold)).